The primary structure comprises 556 residues: Formate--tetrahydrofolate ligase (556 aa).

65–72 (TPAGEGKT) is a binding site for ATP.

The protein belongs to the formate--tetrahydrofolate ligase family.

The enzyme catalyses (6S)-5,6,7,8-tetrahydrofolate + formate + ATP = (6R)-10-formyltetrahydrofolate + ADP + phosphate. It functions in the pathway one-carbon metabolism; tetrahydrofolate interconversion. The chain is Formate--tetrahydrofolate ligase from Carboxydothermus hydrogenoformans (strain ATCC BAA-161 / DSM 6008 / Z-2901).